We begin with the raw amino-acid sequence, 166 residues long: Lipoprotein signal peptidase (166 aa).

4 helical membrane-spanning segments follow: residues 10–30 (GGAL…DQLT), 32–52 (IAVL…FFNL), 71–91 (WQRW…CYLL), and 100–120 (FSLS…DRLI). Catalysis depends on residues aspartate 126 and aspartate 144. A helical transmembrane segment spans residues 135–155 (WHWPAFNLADSAITVGAVLLI).

The protein belongs to the peptidase A8 family.

It is found in the cell inner membrane. It carries out the reaction Release of signal peptides from bacterial membrane prolipoproteins. Hydrolyzes -Xaa-Yaa-Zaa-|-(S,diacylglyceryl)Cys-, in which Xaa is hydrophobic (preferably Leu), and Yaa (Ala or Ser) and Zaa (Gly or Ala) have small, neutral side chains.. It participates in protein modification; lipoprotein biosynthesis (signal peptide cleavage). Functionally, this protein specifically catalyzes the removal of signal peptides from prolipoproteins. This is Lipoprotein signal peptidase from Burkholderia mallei (strain ATCC 23344).